The primary structure comprises 151 residues: Large ribosomal subunit protein bL9 (151 aa).

Belongs to the bacterial ribosomal protein bL9 family.

In terms of biological role, binds to the 23S rRNA. The polypeptide is Large ribosomal subunit protein bL9 (Thermosipho melanesiensis (strain DSM 12029 / CIP 104789 / BI429)).